The chain runs to 181 residues: Protein canopy homolog 1 (181 aa).

The N-terminal stretch at 1-21 is a signal peptide; the sequence is MAILLHFGVLITAFLSSHVEG. In terms of domain architecture, Saposin B-type spans 25 to 177; it reads PILYCGACRA…EETGLCKEYL (153 aa). Cystine bridges form between Cys29/Cys173, Cys32/Cys166, and Cys87/Cys139. Residues 178 to 181 carry the Prevents secretion from ER motif; it reads HNEL.

The protein belongs to the canopy family.

The protein localises to the endoplasmic reticulum. Functionally, plays an role in early embryonic development. This Xenopus laevis (African clawed frog) protein is Protein canopy homolog 1 (cnpy1).